We begin with the raw amino-acid sequence, 334 residues long: Hydroxyproline O-arabinosyltransferase NOD3 (334 aa).

Residues 1-18 form a helical; Signal-anchor membrane-spanning segment; that stretch reads LLMVLGFFFATYNLVSMI.

Belongs to the RDN family.

Its subcellular location is the golgi apparatus membrane. The catalysed reaction is trans-4-hydroxy-L-prolyl-[protein] + UDP-beta-L-arabinofuranose = O-(beta-L-arabinofuranosyl)-trans-4-hydroxy-L-prolyl-[protein] + UDP + H(+). In terms of biological role, probable glycosyltransferase involved in the O-arabinosylation of several proteins including extensins and small signaling peptides. Catalyzes the transfer of the initial L-arabinose to the hydroxyl group of Hyp residues. Probably involved in the arabinosylation of CLAVATA3/ESR-related (CLE) signaling peptides that move from root to shoot, to interact with receptor kinase signaling that regulates nodulation. Involved in long distance nodulation signaling events. Involved in the autoregulation of nodulation (AON), a long distance systemic signaling from root to shoot and back again, which allows legumes to limit the number of root nodules formed based on available nitrogen and previous rhizobial colonization. This Pisum sativum (Garden pea) protein is Hydroxyproline O-arabinosyltransferase NOD3.